The chain runs to 278 residues: Formamidopyrimidine-DNA glycosylase (278 aa).

Catalysis depends on Pro2, which acts as the Schiff-base intermediate with DNA. The active-site Proton donor is Glu3. Lys60 functions as the Proton donor; for beta-elimination activity in the catalytic mechanism. DNA contacts are provided by His95 and Arg114. Residues 244-278 (WVYRRGGEPCRRCGTIIRRDKLSGRSTHWCPTCQG) form an FPG-type zinc finger. Arg268 (proton donor; for delta-elimination activity) is an active-site residue.

The protein belongs to the FPG family. In terms of assembly, monomer. Requires Zn(2+) as cofactor.

It catalyses the reaction Hydrolysis of DNA containing ring-opened 7-methylguanine residues, releasing 2,6-diamino-4-hydroxy-5-(N-methyl)formamidopyrimidine.. It carries out the reaction 2'-deoxyribonucleotide-(2'-deoxyribose 5'-phosphate)-2'-deoxyribonucleotide-DNA = a 3'-end 2'-deoxyribonucleotide-(2,3-dehydro-2,3-deoxyribose 5'-phosphate)-DNA + a 5'-end 5'-phospho-2'-deoxyribonucleoside-DNA + H(+). In terms of biological role, involved in base excision repair of DNA damaged by oxidation or by mutagenic agents. Acts as a DNA glycosylase that recognizes and removes damaged bases. Has a preference for oxidized purines, such as 7,8-dihydro-8-oxoguanine (8-oxoG). Has AP (apurinic/apyrimidinic) lyase activity and introduces nicks in the DNA strand. Cleaves the DNA backbone by beta-delta elimination to generate a single-strand break at the site of the removed base with both 3'- and 5'-phosphates. The sequence is that of Formamidopyrimidine-DNA glycosylase from Parasynechococcus marenigrum (strain WH8102).